The following is a 63-amino-acid chain: DNA-directed RNA polymerase 7 kDa subunit (63 aa).

It belongs to the poxviridae DNA-directed RNA polymerase 7 kDa subunit family. As to quaternary structure, the DNA-dependent RNA polymerase (vRNAP) consists of eight subunits encoded by early viral genes and termed according to their apparent molecular masses Rpo147, Rpo132, Rpo35, Rpo30, Rpo22, Rpo19, Rpo18, and Rpo7. The same holoenzyme, with the addition of the transcription-specificity factor RAP94, is used for early gene expression.

It is found in the virion. It carries out the reaction RNA(n) + a ribonucleoside 5'-triphosphate = RNA(n+1) + diphosphate. Its function is as follows. Part of the DNA-dependent RNA polymerase which catalyzes the transcription of viral DNA into RNA using the four ribonucleoside triphosphates as substrates. Responsible for the transcription of early, intermediate and late genes. DNA-dependent RNA polymerase associates with the early transcription factor (ETF), itself composed of OPG118 and OPG134, thereby allowing the early genes transcription. Late transcription, and probably also intermediate transcription, require newly synthesized RNA polymerase. The chain is DNA-directed RNA polymerase 7 kDa subunit (OPG090) from Monkeypox virus.